The sequence spans 373 residues: Queuine tRNA-ribosyltransferase (373 aa).

The Proton acceptor role is filled by Asp93. Substrate is bound by residues 93 to 97, Asp147, Gln191, and Gly218; that span reads DSGGF. An RNA binding region spans residues 249 to 255; that stretch reads GVGAPRD. The active-site Nucleophile is the Asp268. Positions 273-277 are RNA binding; important for wobble base 34 recognition; the sequence is TRNAR. Zn(2+) is bound by residues Cys306, Cys308, Cys311, and His337.

It belongs to the queuine tRNA-ribosyltransferase family. Homodimer. Within each dimer, one monomer is responsible for RNA recognition and catalysis, while the other monomer binds to the replacement base PreQ1. Zn(2+) is required as a cofactor.

It catalyses the reaction 7-aminomethyl-7-carbaguanine + guanosine(34) in tRNA = 7-aminomethyl-7-carbaguanosine(34) in tRNA + guanine. Its pathway is tRNA modification; tRNA-queuosine biosynthesis. Functionally, catalyzes the base-exchange of a guanine (G) residue with the queuine precursor 7-aminomethyl-7-deazaguanine (PreQ1) at position 34 (anticodon wobble position) in tRNAs with GU(N) anticodons (tRNA-Asp, -Asn, -His and -Tyr). Catalysis occurs through a double-displacement mechanism. The nucleophile active site attacks the C1' of nucleotide 34 to detach the guanine base from the RNA, forming a covalent enzyme-RNA intermediate. The proton acceptor active site deprotonates the incoming PreQ1, allowing a nucleophilic attack on the C1' of the ribose to form the product. After dissociation, two additional enzymatic reactions on the tRNA convert PreQ1 to queuine (Q), resulting in the hypermodified nucleoside queuosine (7-(((4,5-cis-dihydroxy-2-cyclopenten-1-yl)amino)methyl)-7-deazaguanosine). This chain is Queuine tRNA-ribosyltransferase, found in Solidesulfovibrio magneticus (strain ATCC 700980 / DSM 13731 / RS-1) (Desulfovibrio magneticus).